The sequence spans 234 residues: Sugar fermentation stimulation protein homolog (234 aa).

It belongs to the SfsA family.

The protein is Sugar fermentation stimulation protein homolog of Edwardsiella ictaluri (strain 93-146).